Here is a 211-residue protein sequence, read N- to C-terminus: Endo-1,4-beta-xylanase 6 (211 aa).

The signal sequence occupies residues 1–16 (MKVTAAFAGLLVTALA). A GH11 domain is found at 19-210 (APEPVLVSRS…GAGSASVTIS (192 aa)). Glu106 functions as the Nucleophile in the catalytic mechanism. Glu197 serves as the catalytic Proton donor.

It belongs to the glycosyl hydrolase 11 (cellulase G) family.

The protein resides in the secreted. It catalyses the reaction Endohydrolysis of (1-&gt;4)-beta-D-xylosidic linkages in xylans.. It participates in glycan degradation; xylan degradation. Its function is as follows. Endo-1,4-beta-xylanase involved in the hydrolysis of xylan, a major structural heterogeneous polysaccharide found in plant biomass representing the second most abundant polysaccharide in the biosphere, after cellulose. In Aspergillus niger, this protein is Endo-1,4-beta-xylanase 6 (XYN6).